Here is a 298-residue protein sequence, read N- to C-terminus: uncharacterized protein (298 aa).

8 consecutive transmembrane segments (helical) span residues serine 5–tryptophan 25, valine 52–leucine 72, leucine 105–valine 125, isoleucine 138–leucine 158, isoleucine 163–alanine 183, glycine 208–threonine 228, leucine 236–isoleucine 256, and glycine 273–isoleucine 293.

It belongs to the CDS family.

It is found in the cell membrane. This is an uncharacterized protein from Escherichia coli (strain K12).